The chain runs to 78 residues: Apolipoprotein C-I (78 aa).

Residues 1–26 form the signal peptide; sequence MRLILWLPVLVVVLLMVLEGPAPAQG.

It belongs to the apolipoprotein C1 family.

It localises to the secreted. Its function is as follows. Inhibitor of lipoprotein binding to the low density lipoprotein (LDL) receptor, LDL receptor-related protein, and very low density lipoprotein (VLDL) receptor. Associates with high density lipoproteins (HDL) and the triacylglycerol-rich lipoproteins in the plasma and makes up about 10% of the protein of the VLDL and 2% of that of HDL. Appears to interfere directly with fatty acid uptake and is also the major plasma inhibitor of cholesteryl ester transfer protein (CETP). Binds free fatty acids and reduces their intracellular esterification. Modulates the interaction of APOE with beta-migrating VLDL and inhibits binding of beta-VLDL to the LDL receptor-related protein. This is Apolipoprotein C-I (APOC1) from Puma concolor (Mountain lion).